We begin with the raw amino-acid sequence, 601 residues long: NADH-quinone oxidoreductase subunit C/D (601 aa).

Residues 1 to 191 form an NADH dehydrogenase I subunit C region; it reads MKLTRDFPSN…DPFMLDAAKQ (191 aa). Residues 215 to 601 are NADH dehydrogenase I subunit D; the sequence is DYMFLNLGPN…IDFVMSDVDR (387 aa).

The protein in the N-terminal section; belongs to the complex I 30 kDa subunit family. It in the C-terminal section; belongs to the complex I 49 kDa subunit family. NDH-1 is composed of 13 different subunits. Subunits NuoB, CD, E, F, and G constitute the peripheral sector of the complex.

It localises to the cell inner membrane. It catalyses the reaction a quinone + NADH + 5 H(+)(in) = a quinol + NAD(+) + 4 H(+)(out). NDH-1 shuttles electrons from NADH, via FMN and iron-sulfur (Fe-S) centers, to quinones in the respiratory chain. The immediate electron acceptor for the enzyme in this species is believed to be ubiquinone. Couples the redox reaction to proton translocation (for every two electrons transferred, four hydrogen ions are translocated across the cytoplasmic membrane), and thus conserves the redox energy in a proton gradient. This chain is NADH-quinone oxidoreductase subunit C/D, found in Aeromonas salmonicida (strain A449).